A 692-amino-acid chain; its full sequence is Putative ESX-1 scaffolding and assembly protein SaeA (692 aa).

A compositionally biased stretch (basic and acidic residues) spans 1-21; that stretch reads MGERGELVSDLHPSDDHDADP. 2 disordered regions span residues 1–23 and 87–134; these read MGER…DPRL and PAAP…TTGF. Residues 89-107 are compositionally biased toward pro residues; sequence APEPDPPPVPEPQPEPEPG.

It is found in the cytoplasm. Functionally, may be involved in assembly of the ESX-1 / type VII specialized secretion system (T7SS), which exports several proteins including EsxA and EsxB. Involved in DNA conjugation in recipient (MKD8) but not donor (mc(2)155) strain. The sequence is that of Putative ESX-1 scaffolding and assembly protein SaeA from Mycolicibacterium smegmatis (strain ATCC 700084 / mc(2)155) (Mycobacterium smegmatis).